Reading from the N-terminus, the 609-residue chain is Cationic amino acid transporter 3, mitochondrial (609 aa).

A mitochondrion-targeting transit peptide spans 1-14; sequence MGCLRSLVRRKQFD. Transmembrane regions (helical) follow at residues 38-58, 66-86, 104-124, 161-181, 190-210, 226-246, 270-290, 314-334, 361-381, 388-408, 474-494, 499-519, 534-554, and 558-578; these read LIAIGVGSTIGAGVYILVGTV, ALALSFLIAGISAALSAFCYA, ICIGEGVAWLIGWALILEYTI, IVVDPCAAVLVFIVTGLCCLG, GIVTTANVFVMIFVIVAGSYL, FPYGVDGMLTGSATVFFAYIG, ISLLLCCLLYMMVSVVIVGLV, AYLINLGAVMALCSALMGSIL, QVPINGTITTGVCAAILAFFM, GMVSVGTLVAFTMVAISLLIV, IMFTCIGNFLLSYAASSFLLP, YSLCGVGGLFLLVGLIVLICI, FICPFVPLLPIVCILINMYLL, and GAATWVRVSVWLFLGVVVYIF.

The protein belongs to the amino acid-polyamine-organocation (APC) superfamily. Cationic amino acid transporter (CAT) (TC 2.A.3.3) family. As to expression, expressed in roots, stems, flowers, and leaves.

Its subcellular location is the mitochondrion membrane. In terms of biological role, permease involved in the transport of the cationic neutral or acidic amino acids. The polypeptide is Cationic amino acid transporter 3, mitochondrial (CAT3) (Arabidopsis thaliana (Mouse-ear cress)).